The following is a 460-amino-acid chain: MLSIYNTLTKSKEVFKPLDGNKVRMYVCGMTVYDYCHLGHGRSMVAFDLVTRWLRFSGYELTYVRNITDIDDKIINRARENGESFDALTARMIEAMHEDEARLNILKPDMEPRATDHIPGMHAMIQTLIDKGYAYAPGNGDVYYRVGKFQGYGKLSRKKIEDLRIGARIEVDESKEDPLDFVLWKGVKPGEPSWESPWGAGRPGWHIECSVMSTCCLGETFDIHGGGSDLEFPHHENEIAQSEAATGKTYANAWLHCGMIRINGEKMSKSLNNFFTIRDVLEKYHPEVVRYLLVSSHYRSAINYSEDSLRESKAALERFYHALKGLPVAEPAGGEAFVERFSTAMNDDFGTPEACAVLFEMVREINRLRESDIAAAACLAARLKQLASVLGVLQLEADDFLRAGAEGRVDAAEVEALIQARLAARAAKDWAESDRIRDRITAMGVLLEDGKGGTTWRLAD.

Cysteine 28 provides a ligand contact to Zn(2+). A 'HIGH' region motif is present at residues 30 to 40; the sequence is MTVYDYCHLGH. 3 residues coordinate Zn(2+): cysteine 209, histidine 234, and glutamate 238. The short motif at 266 to 270 is the 'KMSKS' region element; the sequence is KMSKS. Residue lysine 269 coordinates ATP.

The protein belongs to the class-I aminoacyl-tRNA synthetase family. As to quaternary structure, monomer. Zn(2+) serves as cofactor.

It localises to the cytoplasm. It carries out the reaction tRNA(Cys) + L-cysteine + ATP = L-cysteinyl-tRNA(Cys) + AMP + diphosphate. This Pseudomonas syringae pv. syringae (strain B728a) protein is Cysteine--tRNA ligase.